Here is a 461-residue protein sequence, read N- to C-terminus: D-phenylhydantoinase (461 aa).

3 residues coordinate a divalent metal cation: H59, H61, and K151. K151 bears the N6-carboxylysine mark. Y156 contributes to the substrate binding site. Positions 182 and 239 each coordinate a divalent metal cation. S286 is a substrate binding site. A divalent metal cation is bound at residue D313. N335 is a binding site for substrate.

The protein belongs to the metallo-dependent hydrolases superfamily. Hydantoinase/dihydropyrimidinase family. In terms of assembly, homotetramer. The cofactor is a divalent metal cation. Post-translationally, carboxylation allows a single lysine to coordinate two divalent metal cations.

It catalyses the reaction D-5-phenylhydantoin + H2O = N-carbamoyl-D-phenylglycine + H(+). Its function is as follows. Catalyzes the stereospecific hydrolysis of the cyclic amide bond of D-hydantoin derivatives with an aromatic side chains at the 5'-position. Has no activity on dihydropyrimidines. The physiological function is unknown. The sequence is that of D-phenylhydantoinase from Escherichia coli O17:K52:H18 (strain UMN026 / ExPEC).